The following is an 84-amino-acid chain: Putative membrane protein insertion efficiency factor (84 aa).

This sequence belongs to the UPF0161 family.

The protein resides in the cell inner membrane. Could be involved in insertion of integral membrane proteins into the membrane. In Shewanella denitrificans (strain OS217 / ATCC BAA-1090 / DSM 15013), this protein is Putative membrane protein insertion efficiency factor.